Reading from the N-terminus, the 155-residue chain is uncharacterized protein (155 aa).

Belongs to the mimivirus L6/L7/L57 family.

This is an uncharacterized protein from Acanthamoeba polyphaga (Amoeba).